The primary structure comprises 772 residues: Mitochondrial intermediate peptidase (772 aa).

The transit peptide at 1 to 42 directs the protein to the mitochondrion; sequence MFANSARNALKKRPQNLQPFRFQGCLFSKRANRPLTTKVQHL. Residue His-556 participates in Zn(2+) binding. Residue Glu-557 is part of the active site. 2 residues coordinate Zn(2+): His-560 and His-563.

It belongs to the peptidase M3 family. Zn(2+) serves as cofactor.

It is found in the mitochondrion matrix. It carries out the reaction Release of an N-terminal octapeptide as second stage of processing of some proteins imported into the mitochondrion.. Functionally, cleaves proteins, imported into the mitochondrion, to their mature size. While most mitochondrial precursor proteins are processed to the mature form in one step by mitochondrial processing peptidase (MPP), the sequential cleavage by MIP of an octapeptide after initial processing by MPP is a required step for a subgroup of nuclear-encoded precursor proteins destined for the matrix or the inner membrane. This Laccaria bicolor (strain S238N-H82 / ATCC MYA-4686) (Bicoloured deceiver) protein is Mitochondrial intermediate peptidase (OCT1).